The primary structure comprises 346 residues: Pyrophosphate--fructose 6-phosphate 1-phosphotransferase (346 aa).

Residue G13 coordinates diphosphate. Residue E105 coordinates Mg(2+). Substrate is bound by residues T127–D129, R164, M171–R173, E224, R269, and H275–R278. D129 serves as the catalytic Proton acceptor.

It belongs to the phosphofructokinase type A (PFKA) family. Mixed-substrate PFK group III subfamily. As to quaternary structure, homodimer. It depends on Mg(2+) as a cofactor.

Its subcellular location is the cytoplasm. It carries out the reaction beta-D-fructose 6-phosphate + diphosphate = beta-D-fructose 1,6-bisphosphate + phosphate + H(+). Its pathway is carbohydrate degradation; glycolysis; D-glyceraldehyde 3-phosphate and glycerone phosphate from D-glucose: step 3/4. Non-allosteric. Its function is as follows. Catalyzes the phosphorylation of D-fructose 6-phosphate, the first committing step of glycolysis. Uses inorganic phosphate (PPi) as phosphoryl donor instead of ATP like common ATP-dependent phosphofructokinases (ATP-PFKs), which renders the reaction reversible, and can thus function both in glycolysis and gluconeogenesis. Consistently, PPi-PFK can replace the enzymes of both the forward (ATP-PFK) and reverse (fructose-bisphosphatase (FBPase)) reactions. This is Pyrophosphate--fructose 6-phosphate 1-phosphotransferase from Dictyoglomus thermophilum.